Here is a 676-residue protein sequence, read N- to C-terminus: Hemin receptor (676 aa).

Residues Met1 to Ala28 form the signal peptide. The TonB box signature appears at Asp44–Thr51. Residues Ser56 to Val167 form the TBDR plug domain. The TBDR beta-barrel domain maps to Asn178–Trp676. Positions Gln659 to Trp676 match the TonB C-terminal box motif.

Belongs to the TonB-dependent receptor family.

Its subcellular location is the cell outer membrane. Its function is as follows. This protein is involved in the initial step of iron uptake by binding hemin, an iron chelatin siderophore that allows the bacteria to extract iron from the environment. This is Hemin receptor (hmuR) from Yersinia pestis.